The following is a 65-amino-acid chain: Toxin CsEM1 (65 aa).

The 65-residue stretch at 1 to 65 folds into the LCN-type CS-alpha/beta domain; it reads KEGYLVNSYT…VWPLPNKTCN (65 aa). 4 cysteine pairs are disulfide-bonded: cysteine 12-cysteine 64, cysteine 16-cysteine 40, cysteine 25-cysteine 45, and cysteine 29-cysteine 47.

The protein belongs to the long (4 C-C) scorpion toxin superfamily. Sodium channel inhibitor family. Beta subfamily. Expressed by the venom gland.

It localises to the secreted. Its function is as follows. Beta toxins bind voltage-independently at site-4 of sodium channels (Nav) and shift the voltage of activation toward more negative potentials thereby affecting sodium channel activation and promoting spontaneous and repetitive firing. Highly potent. The sequence is that of Toxin CsEM1 from Centruroides sculpturatus (Arizona bark scorpion).